Here is a 128-residue protein sequence, read N- to C-terminus: Probable 4-amino-4-deoxy-L-arabinose-phosphoundecaprenol flippase subunit ArnF (128 aa).

Over 1-2 (MG) the chain is Cytoplasmic. The helical transmembrane segment at 3–23 (LIWGLFSVIIASVAQLSLGFA) threads the bilayer. The Periplasmic segment spans residues 24 to 35 (ASHLPPMTHLWD). The chain crosses the membrane as a helical span at residues 36-56 (FIAALLAFGLDARILLLGLLG). Residues 57 to 76 (YLLSVFCWYKTLHKLALSKA) are Cytoplasmic-facing. Residues 77–97 (YALLSMSYVLVWIASMVLPGW) traverse the membrane as a helical segment. At 98-100 (EGT) the chain is on the periplasmic side. Residues 101-121 (FSLKALLGVACIMSGLMLIFL) traverse the membrane as a helical segment. At 122-128 (PMTKQRY) the chain is on the cytoplasmic side.

The protein belongs to the ArnF family. In terms of assembly, heterodimer of ArnE and ArnF.

It localises to the cell inner membrane. It functions in the pathway bacterial outer membrane biogenesis; lipopolysaccharide biosynthesis. Functionally, translocates 4-amino-4-deoxy-L-arabinose-phosphoundecaprenol (alpha-L-Ara4N-phosphoundecaprenol) from the cytoplasmic to the periplasmic side of the inner membrane. This chain is Probable 4-amino-4-deoxy-L-arabinose-phosphoundecaprenol flippase subunit ArnF, found in Escherichia coli O9:H4 (strain HS).